We begin with the raw amino-acid sequence, 1213 residues long: Protein jagged-1b (1213 aa).

The N-terminal stretch at 1-26 (MILRRSSVFSAFYLHAFLLCLRTTVS) is a signal peptide. Over 27 to 1064 (DASGHFELEI…HQIPSPKTDY (1038 aa)) the chain is Extracellular. A glycan (N-linked (GlcNAc...) asparagine) is linked at Asn-139. Residues 182–226 (VTCLEHYYGFGCNKFCRPRDEFFGHYTCDQNGNKTCLEGWTGPDC) enclose the DSL domain. Disulfide bonds link Cys-184/Cys-193 and Cys-197/Cys-209. N-linked (GlcNAc...) asparagine glycosylation occurs at Asn-214. 39 disulfides stabilise this stretch: Cys-217–Cys-226, Cys-231–Cys-242, Cys-235–Cys-248, Cys-250–Cys-259, Cys-262–Cys-273, Cys-268–Cys-279, Cys-281–Cys-290, Cys-297–Cys-309, Cys-303–Cys-319, Cys-321–Cys-330, Cys-337–Cys-348, Cys-342–Cys-357, Cys-359–Cys-368, Cys-375–Cys-386, Cys-380–Cys-395, Cys-397–Cys-406, Cys-413–Cys-424, Cys-418–Cys-433, Cys-435–Cys-444, Cys-451–Cys-461, Cys-455–Cys-470, Cys-472–Cys-481, Cys-488–Cys-499, Cys-493–Cys-508, Cys-510–Cys-519, Cys-526–Cys-537, Cys-531–Cys-546, Cys-548–Cys-557, Cys-596–Cys-612, Cys-614–Cys-623, Cys-630–Cys-641, Cys-635–Cys-650, Cys-652–Cys-661, Cys-668–Cys-679, Cys-673–Cys-688, Cys-690–Cys-699, Cys-706–Cys-717, Cys-711–Cys-726, and Cys-728–Cys-737. Residues 227 to 260 (NTAICRQGCSTEHGSCKQPGGCKCLYGWQGPYCD) enclose the EGF-like 1 domain. In terms of domain architecture, EGF-like 2; atypical spans 261–291 (KCIPHPGCVHGTCVEPWQCLCDTNWGGQLCD). 2 consecutive EGF-like domains span residues 293–331 (DLNYCGTHQPCLNGGTCSNTGPDKYQCSCEDGYSGVNCE) and 333–369 (AEHACLSNPCANGGTCKETSQGYECHCAIGWSGTSCE). An EGF-like 5; calcium-binding domain is found at 371–407 (NVDDCTPNQCKHGGTCQDLVNGFKCACPPHWTGKTCQ). Positions 409-445 (DANECEDKPCVNAKSCHNLIGAYFCECLPGWSGQNCD) constitute an EGF-like 6; calcium-binding domain. One can recognise an EGF-like 7; calcium-binding domain in the interval 447 to 482 (NINDCKGQCLNGGTCKDLVNGYRCLCPPGYTGEQCE). The EGF-like 8; calcium-binding domain maps to 484 to 520 (DVDECASSPCLNGGRCQDEVNGFQCLCPAGFSGQLCQ). EGF-like domains are found at residues 522–558 (DIDYCKPNPCQNGAQCFNLASDYFCKCPDDYEGKNCS) and 592–624 (SSNVCGPHGRCRSQAGGQFTCECQEGFRGTYCH). N-linked (GlcNAc...) asparagine glycosylation occurs at Asn-556. The region spanning 626 to 662 (NINDCESNPCRNGGTCIDKVNVYQCICADGWEGVHCE) is the EGF-like 11; calcium-binding domain. In terms of domain architecture, EGF-like 12; calcium-binding spans 664–700 (NIDDCSLNPCLNKGACQDLVNDFYCECRNGWKGKTCH). Positions 702 to 738 (RDSQCDEATCNNGGTCHDEGDTFKCRCSPGWEGATCN) constitute an EGF-like 13 domain. An N-linked (GlcNAc...) asparagine glycan is attached at Asn-742. 9 disulfide bridges follow: Cys-745–Cys-756, Cys-750–Cys-765, Cys-767–Cys-776, Cys-783–Cys-794, Cys-788–Cys-803, Cys-805–Cys-814, Cys-821–Cys-832, Cys-826–Cys-841, and Cys-843–Cys-852. Residues 746 to 777 (LPNPCENGGTCVVNGDSFNCVCKEGWEGSTCT) enclose the EGF-like 14 domain. The 37-residue stretch at 779-815 (NTNDCNPHPCYNSGTCVDGENWYRCECAPGFAGPDCR) folds into the EGF-like 15; calcium-binding domain. The EGF-like 16; calcium-binding domain maps to 817–853 (NINECQSSPCAFGSTCVDEINGYRCLCPPGRIGPDCQ). Residues 860–914 (CIANGQVTADGAKWEEDCNICQCQNGRIHCTMMWCGPKSCRIGKARGGCPASQSC) enclose the VWFC domain. An EGF-like 17 domain is found at 918–956 (KEEQCFVKPCPSLGECWPSAPPPPSKCHASFSYQDDSCA). Residues Asn-957, Asn-988, and Asn-1042 are each glycosylated (N-linked (GlcNAc...) asparagine). Residues 1065 to 1087 (LVPLLSSIFIVLWIFALASAFLW) traverse the membrane as a helical segment. At 1088 to 1213 (CIHRRRKQNT…QSLNRMEYIV (126 aa)) the chain is on the cytoplasmic side. Residues 1181–1202 (EERAPNKNPNWTNKQDNRDLET) are disordered.

Its subcellular location is the membrane. It is found in the cell membrane. Its function is as follows. Ligand for Notch receptors and involved in the mediation of Notch signaling. Seems to be involved in cell-fate decisions. The polypeptide is Protein jagged-1b (jag1b) (Danio rerio (Zebrafish)).